The chain runs to 464 residues: Rhodopsin (464 aa).

At 1–33 (MGRDIPDNETWWYNPTMEVHPHWKQFNQVPDAV) the chain is on the extracellular side. N-linked (GlcNAc...) asparagine glycosylation occurs at N8. The helical transmembrane segment at 34-58 (YYSLGIFIGICGIIGCTGNGIVIYL) threads the bilayer. At 59–70 (FTKTKSLQTPAN) the chain is on the cytoplasmic side. Residues 71–97 (MFIINLAFSDFTFSLVNGFPLMTISCF) form a helical membrane-spanning segment. At 98–109 (IKKWVFGMAACK) the chain is on the extracellular side. C108 and C186 are joined by a disulfide. The helical transmembrane segment at 110–131 (VYGFIGGIFGLMSIMTMSMISI) threads the bilayer. The short motif at 132-134 (DRY) is the 'Ionic lock' involved in activated form stabilization element. The Cytoplasmic portion of the chain corresponds to 132–151 (DRYNVIGRPMAASKKMSHRR). A helical transmembrane segment spans residues 152-172 (AFLMIIFVWMWSTLWSIGPIF). Residues 173 to 199 (GWGAYVLEGVLCNCSFDYITRDSATRS) lie on the Extracellular side of the membrane. The chain crosses the membrane as a helical span at residues 200-224 (NIVCMYIFAFCFPILIIFFCYFNIV). At 225–261 (MAVSNHEKEMAAMAKRLNAKELRKAQAGASAEMKLAK) the chain is on the cytoplasmic side. A helical transmembrane segment spans residues 262 to 283 (ISIVIVTQFLLSWSPYAVVALL). At 284–293 (AQFGPIEWVT) the chain is on the extracellular side. The chain crosses the membrane as a helical span at residues 294-315 (PYAAQLPVMFAKASAIHNPLIY). K305 bears the N6-(retinylidene)lysine mark. The Cytoplasmic portion of the chain corresponds to 316-464 (SVSHPKFREA…QGVDNQAYQA (149 aa)). 2 S-palmitoyl cysteine lipidation sites follow: C336 and C337. Residues 344-464 (VEDDKDAETE…QGVDNQAYQA (121 aa)) form a disordered region. Residues 367–401 (AAQMKEMMAMMQKMQQQQAAYPPQGAYPPQGGYPP) show a composition bias toward low complexity. 2 stretches are compositionally biased toward pro residues: residues 416–425 (QGYPPPPQGY) and 434–452 (QGYP…PQAA).

It belongs to the G-protein coupled receptor 1 family. Opsin subfamily. Post-translationally, contains one covalently linked retinal chromophore. Upon light absorption, the covalently bound 11-cis-retinal is converted to all-trans-retinal. After hydrolysis of the Schiff base and release of the covalently bound all-trans-retinal, active rhodopsin is regenerated by binding of a fresh molecule of 11-cis-retinal.

Its subcellular location is the cell projection. The protein localises to the rhabdomere membrane. Photoreceptor required for image-forming vision at low light intensity. Light-induced isomerization of 11-cis to all-trans retinal triggers a conformational change that activates signaling via G-proteins. Signaling mediates the activation of phospholipase C. Subsequent receptor phosphorylation mediates displacement of the bound G-protein alpha subunit by arrestin and terminates signaling. This is Rhodopsin (RHO) from Sepia officinalis (Common cuttlefish).